Here is a 307-residue protein sequence, read N- to C-terminus: uncharacterized protein (307 aa).

To B.burgdorferi BB0340.

This is an uncharacterized protein from Treponema pallidum (strain Nichols).